The chain runs to 150 residues: uncharacterized protein (150 aa).

This is an uncharacterized protein from Methanocaldococcus jannaschii (strain ATCC 43067 / DSM 2661 / JAL-1 / JCM 10045 / NBRC 100440) (Methanococcus jannaschii).